A 457-amino-acid polypeptide reads, in one-letter code: Tubulin beta chain (457 aa).

Positions 11, 69, 138, 142, 143, 144, 204, and 226 each coordinate GTP. Residue E69 participates in Mg(2+) binding. Positions 431–457 are disordered; that stretch reads EGEEEEDAYAEGAVVNGDQSYEDQYAA.

The protein belongs to the tubulin family. In terms of assembly, dimer of alpha and beta chains. A typical microtubule is a hollow water-filled tube with an outer diameter of 25 nm and an inner diameter of 15 nM. Alpha-beta heterodimers associate head-to-tail to form protofilaments running lengthwise along the microtubule wall with the beta-tubulin subunit facing the microtubule plus end conferring a structural polarity. Microtubules usually have 13 protofilaments but different protofilament numbers can be found in some organisms and specialized cells. Mg(2+) is required as a cofactor.

It localises to the cytoplasm. Its subcellular location is the cytoskeleton. Functionally, tubulin is the major constituent of microtubules, a cylinder consisting of laterally associated linear protofilaments composed of alpha- and beta-tubulin heterodimers. Microtubules grow by the addition of GTP-tubulin dimers to the microtubule end, where a stabilizing cap forms. Below the cap, tubulin dimers are in GDP-bound state, owing to GTPase activity of alpha-tubulin. This chain is Tubulin beta chain (TUBB1), found in Porphyra purpurea (Red seaweed).